The primary structure comprises 558 residues: Suppressor of zyg-1 protein 20 (558 aa).

Residues 45–146 (KVKAEESSGV…ARNRILGTEY (102 aa)) form the SUZ domain. 3 disordered regions span residues 50–132 (ESSG…ERQA), 205–241 (FTQPPPSVSESGGVYNGPPGFQQKQPNFQPTLQQQSL), and 374–558 (QRNQ…NRPQ). Basic and acidic residues predominate over residues 69–81 (EEPKRVFLRRPKD). Residues 94 to 109 (PPTSADTEEQPVTNVR) show a composition bias toward polar residues. Residues 117-131 (NQKEKQPAPTYEERQ) show a composition bias toward basic and acidic residues. 2 stretches are compositionally biased toward low complexity: residues 374–394 (QRNQVNSYPQQNGAGRGQNRQ) and 424–477 (NNGQ…QQQQ). Composition is skewed to polar residues over residues 478–508 (NKSGKFGQNRNDMQKNNYQPNLQQPPMSQNP) and 545–558 (SASQWPALQQNRPQ).

Interacts (via C-terminus) with atx-2 (via C-terminus); the interaction is RNA independent. Interacts with let-92. Post-translationally, phosphorylated. May be dephosphorylated by let-92.

The protein localises to the cytoplasm. It localises to the cytoskeleton. The protein resides in the microtubule organizing center. Its subcellular location is the centrosome. It is found in the centriole. The protein localises to the nucleus. It localises to the nucleolus. The protein resides in the chromosome. Functionally, RNA binding protein that is required for normal cell division and cytokinesis during embryonic development. Functions with RNA-binding protein atx-2 to ensure embryonic cell division, and to this end, plays a role in the regulation of centrosome assembly, position and size, and in astral microtubule outgrowth and nucleation. Furthermore, negatively regulates the levels of the protein kinase zyg-1 at the centrosome. Also involved in ensuring centrosome attachment to the nuclear envelope. The chain is Suppressor of zyg-1 protein 20 from Caenorhabditis elegans.